Here is a 402-residue protein sequence, read N- to C-terminus: 3-dehydroquinate synthase (402 aa).

It belongs to the archaeal-type DHQ synthase family.

The enzyme catalyses 2-amino-2,3,7-trideoxy-D-lyxo-hept-6-ulosonate + NAD(+) + H2O = 3-dehydroquinate + NH4(+) + NADH + H(+). In terms of biological role, catalyzes the oxidative deamination and cyclization of 2-amino-3,7-dideoxy-D-threo-hept-6-ulosonic acid (ADH) to yield 3-dehydroquinate (DHQ), which is fed into the canonical shikimic pathway of aromatic amino acid biosynthesis. This chain is 3-dehydroquinate synthase, found in Methanopyrus kandleri (strain AV19 / DSM 6324 / JCM 9639 / NBRC 100938).